The sequence spans 73 residues: MAKKEDTIVLEGRVQELLPGMHFKILLENGMPVTAHLCGKMRMSNIRLLVGDRVTVEMSAYDLTKARVVYRHR.

The region spanning 1-73 (MAKKEDTIVL…TKARVVYRHR (73 aa)) is the S1-like domain.

It belongs to the IF-1 family. Component of the 30S ribosomal translation pre-initiation complex which assembles on the 30S ribosome in the order IF-2 and IF-3, IF-1 and N-formylmethionyl-tRNA(fMet); mRNA recruitment can occur at any time during PIC assembly.

The protein localises to the cytoplasm. In terms of biological role, one of the essential components for the initiation of protein synthesis. Stabilizes the binding of IF-2 and IF-3 on the 30S subunit to which N-formylmethionyl-tRNA(fMet) subsequently binds. Helps modulate mRNA selection, yielding the 30S pre-initiation complex (PIC). Upon addition of the 50S ribosomal subunit IF-1, IF-2 and IF-3 are released leaving the mature 70S translation initiation complex. The protein is Translation initiation factor IF-1 of Chlamydia caviae (strain ATCC VR-813 / DSM 19441 / 03DC25 / GPIC) (Chlamydophila caviae).